Reading from the N-terminus, the 493-residue chain is L-arabinose isomerase 1 (493 aa).

Mn(2+)-binding residues include Glu301, Glu326, His343, and His442.

The protein belongs to the arabinose isomerase family. Mn(2+) serves as cofactor.

It carries out the reaction beta-L-arabinopyranose = L-ribulose. It functions in the pathway carbohydrate degradation; L-arabinose degradation via L-ribulose; D-xylulose 5-phosphate from L-arabinose (bacterial route): step 1/3. Catalyzes the conversion of L-arabinose to L-ribulose. The chain is L-arabinose isomerase 1 from Bacillus licheniformis (strain ATCC 14580 / DSM 13 / JCM 2505 / CCUG 7422 / NBRC 12200 / NCIMB 9375 / NCTC 10341 / NRRL NRS-1264 / Gibson 46).